Reading from the N-terminus, the 525-residue chain is Protein ea59 (525 aa).

In Escherichia coli (Bacteriophage lambda), this protein is Protein ea59 (ea59).